The primary structure comprises 207 residues: Protein MK0488 (207 aa).

The 193-residue stretch at 8 to 200 (EEGEFLVRLA…EEEPEGPVRE (193 aa)) folds into the AMMECR1 domain.

This is Protein MK0488 from Methanopyrus kandleri (strain AV19 / DSM 6324 / JCM 9639 / NBRC 100938).